The following is a 391-amino-acid chain: S-adenosylmethionine synthase (391 aa).

His19 serves as a coordination point for ATP. Asp21 contributes to the Mg(2+) binding site. K(+) is bound at residue Glu47. Positions 60 and 103 each coordinate L-methionine. The flexible loop stretch occupies residues Gln103–Arg113. ATP contacts are provided by residues Asp168–Lys170, Arg236–Phe237, Asp245, Arg251–Lys252, Ala268, and Lys272. Position 245 (Asp245) interacts with L-methionine. Residue Lys276 coordinates L-methionine.

It belongs to the AdoMet synthase family. As to quaternary structure, homotetramer; dimer of dimers. Mg(2+) serves as cofactor. K(+) is required as a cofactor.

The protein localises to the cytoplasm. The enzyme catalyses L-methionine + ATP + H2O = S-adenosyl-L-methionine + phosphate + diphosphate. It functions in the pathway amino-acid biosynthesis; S-adenosyl-L-methionine biosynthesis; S-adenosyl-L-methionine from L-methionine: step 1/1. Functionally, catalyzes the formation of S-adenosylmethionine (AdoMet) from methionine and ATP. The overall synthetic reaction is composed of two sequential steps, AdoMet formation and the subsequent tripolyphosphate hydrolysis which occurs prior to release of AdoMet from the enzyme. In Oleidesulfovibrio alaskensis (strain ATCC BAA-1058 / DSM 17464 / G20) (Desulfovibrio alaskensis), this protein is S-adenosylmethionine synthase.